A 154-amino-acid chain; its full sequence is Superoxide dismutase [Cu-Zn] (154 aa).

Residues H47, H49, and H64 each coordinate Cu cation. An intrachain disulfide couples C58 to C147. Zn(2+) is bound by residues H64, H72, H81, and D84. H121 serves as a coordination point for Cu cation. A compositionally biased stretch (basic and acidic residues) spans 124–137; sequence TDDLGRGDSEESKK. The segment at 124 to 144 is disordered; sequence TDDLGRGDSEESKKTGNAGAR. R144 lines the substrate pocket.

The protein belongs to the Cu-Zn superoxide dismutase family. As to quaternary structure, homodimer. Cu cation serves as cofactor. Zn(2+) is required as a cofactor.

It localises to the cytoplasm. It catalyses the reaction 2 superoxide + 2 H(+) = H2O2 + O2. In terms of biological role, destroys radicals which are normally produced within the cells and which are toxic to biological systems. In Emericella nidulans (strain FGSC A4 / ATCC 38163 / CBS 112.46 / NRRL 194 / M139) (Aspergillus nidulans), this protein is Superoxide dismutase [Cu-Zn] (sodA).